Consider the following 191-residue polypeptide: Thymidine kinase (191 aa).

Residues 9–16 (GTMNSGKT) and 85–88 (DEAQ) contribute to the ATP site. The active-site Proton acceptor is Glu-86. Cys-143, Cys-146, Cys-180, and His-183 together coordinate Zn(2+).

It belongs to the thymidine kinase family. As to quaternary structure, homotetramer.

Its subcellular location is the cytoplasm. It carries out the reaction thymidine + ATP = dTMP + ADP + H(+). The protein is Thymidine kinase of Streptococcus gordonii (strain Challis / ATCC 35105 / BCRC 15272 / CH1 / DL1 / V288).